The chain runs to 179 residues: MARHKLRIVAVGSTNPVKIEAVKEGFEKVLGAVEVIGVDVISGVSSHPIGLEETYLGALNRAKNAFEKVQCTYAVGIEAGLIKVGEHYIDIHICVVFDGVNETVGLSQGFEYPKIVAEKVLEGIEGGKIAEEISGIKDIGKNIGLIGYLTDNNITRKDLCRESVIMALIPRMIKNAHLY.

Substrate is bound at residue 13–18; the sequence is STNPVK. Q70 provides a ligand contact to Mg(2+).

This sequence belongs to the YjjX NTPase family. Homodimer. The cofactor is Mg(2+). Mn(2+) is required as a cofactor.

The catalysed reaction is XTP + H2O = XDP + phosphate + H(+). It catalyses the reaction ITP + H2O = IDP + phosphate + H(+). Its function is as follows. Phosphatase that hydrolyzes non-canonical purine nucleotides such as XTP and ITP to their respective diphosphate derivatives. Probably excludes non-canonical purines from DNA/RNA precursor pool, thus preventing their incorporation into DNA/RNA and avoiding chromosomal lesions. The protein is Probable inosine/xanthosine triphosphatase of Methanocaldococcus jannaschii (strain ATCC 43067 / DSM 2661 / JAL-1 / JCM 10045 / NBRC 100440) (Methanococcus jannaschii).